Reading from the N-terminus, the 129-residue chain is Small ribosomal subunit protein uS11 (129 aa).

Belongs to the universal ribosomal protein uS11 family. In terms of assembly, part of the 30S ribosomal subunit. Interacts with proteins S7 and S18. Binds to IF-3.

In terms of biological role, located on the platform of the 30S subunit, it bridges several disparate RNA helices of the 16S rRNA. Forms part of the Shine-Dalgarno cleft in the 70S ribosome. The chain is Small ribosomal subunit protein uS11 from Psychrobacter arcticus (strain DSM 17307 / VKM B-2377 / 273-4).